The sequence spans 229 residues: Ribose-5-phosphate isomerase A (229 aa).

Substrate is bound by residues 28 to 31, 85 to 88, and 98 to 101; these read TGST, DGAD, and KGRG. Residue Glu107 is the Proton acceptor of the active site. Residue Lys125 coordinates substrate.

The protein belongs to the ribose 5-phosphate isomerase family. Homodimer.

It carries out the reaction aldehydo-D-ribose 5-phosphate = D-ribulose 5-phosphate. Its pathway is carbohydrate degradation; pentose phosphate pathway; D-ribose 5-phosphate from D-ribulose 5-phosphate (non-oxidative stage): step 1/1. Functionally, catalyzes the reversible conversion of ribose-5-phosphate to ribulose 5-phosphate. The protein is Ribose-5-phosphate isomerase A of Thermococcus kodakarensis (strain ATCC BAA-918 / JCM 12380 / KOD1) (Pyrococcus kodakaraensis (strain KOD1)).